The following is a 342-amino-acid chain: Putative glycosyltransferases (342 aa).

2 consecutive transmembrane segments (helical) span residues 227-247 and 262-282; these read IFYL…YLII and VIVS…LVGI.

This sequence belongs to the glycosyltransferase 2 family.

The protein resides in the cell membrane. In terms of biological role, may play only a redundant role in maintaining cell wall viability and bacterial virulence. This chain is Putative glycosyltransferases (pimF), found in Mycobacterium tuberculosis (strain CDC 1551 / Oshkosh).